Here is a 134-residue protein sequence, read N- to C-terminus: DNA-binding protein H-NS, plasmid (134 aa).

Residues 23–67 adopt a coiled-coil conformation; it reads LEILEELLEKLSVVVEERRQEESSKEAELKARLEKIESLRQLMLE. Residues 77–96 form a disordered region; sequence SSFSAKSGAPKKVREPRPAK. Residues 112–117 mediate DNA binding; the sequence is QGRTPK.

The protein belongs to the histone-like protein H-NS family. As to quaternary structure, homodimer that oligomerizes on DNA into higher-order complexes that form bridges between disparate regions of DNA compacting it. Interacts with Hha, YdgT and StpA.

The protein resides in the cytoplasm. It is found in the nucleoid. A DNA-binding protein implicated in transcriptional repression and chromosome organization and compaction. Binds DNA, modifying gene expression, especially non-core genes. Does not regulate the same set of genes as its chromosomal counterpart (tested in S.typhimurium strain SL1344 / SV5015, chromosomal H-NS protein is AC A0A0H3NBY9). Thus it has a not-completely overlapping set of gene targets compared to its chromosomal homolog; many of these target genes are either plasmid-encoded or acquired by horizontally transferred genes (HTG). This protein can function in the absence of H-NS-modulating protein Hha (either chromosomal or plasmid-encoded), although many HTG genes are regulated by an H-NS/Hha complex. Binds nucleation sites in AT-rich DNA and bridges them, forming higher-order nucleoprotein complexes and condensing the chromosome. A subset of genes are repressed by H-NS in association with Hha and/or Cnu (ydgT). The protein is DNA-binding protein H-NS, plasmid (hns) of Salmonella typhi.